A 315-amino-acid polypeptide reads, in one-letter code: Protease HtpX homolog (315 aa).

A helical membrane pass occupies residues 16–36; sequence LFMGIGYLIGGASGALIALVV. His130 contributes to the Zn(2+) binding site. Residue Glu131 is part of the active site. His134 contributes to the Zn(2+) binding site. A run of 2 helical transmembrane segments spans residues 145 to 165 and 172 to 192; these read ITAT…FFGG and GPGL…AMLV. Glu201 contacts Zn(2+). Residues 282–315 are disordered; sequence GGGGASIGRPAGPSPRGAPRSPWSGQPRARGPWG. A compositionally biased stretch (low complexity) spans 288–303; that stretch reads IGRPAGPSPRGAPRSP.

This sequence belongs to the peptidase M48B family. It depends on Zn(2+) as a cofactor.

The protein localises to the cell inner membrane. This is Protease HtpX homolog from Rhodopseudomonas palustris (strain BisB5).